A 260-amino-acid chain; its full sequence is Magnesium dechelatase SGRL, chloroplastic (260 aa).

The transit peptide at Met-1–Arg-45 directs the protein to the chloroplast.

Belongs to the staygreen family. In terms of assembly, interacts with the light harvesting complex II (LHCII). Interacts with the chlorophyll catabolic enzymes (CCEs) NYC1, NOL, PAO and RCCR. In terms of tissue distribution, expressed in cotyledons, pollen and young leaves.

The protein resides in the plastid. It is found in the chloroplast thylakoid. It carries out the reaction chlorophyllide a + 2 H(+) = pheophorbide a + Mg(2+). Functionally, magnesium chelatase involved in chlorophyll a degradation in the chlorophyll-protein complexes of photosystem I (PSI) and photosystem II (PSII). Contributes to the degradation of PSI and PSII in the thylakoid membranes. Recombinant SGRL possesses high dechelating activity against chlorophyllide a, very low activity against chlorophyll a, and no activity against chlorophyll b. Contributes to abiotic stress-induced chlorophyll degradation and leaf yellowing during vegetative plant growth. The protein is Magnesium dechelatase SGRL, chloroplastic of Arabidopsis thaliana (Mouse-ear cress).